Consider the following 114-residue polypeptide: Ribonuclease P protein component (114 aa).

This sequence belongs to the RnpA family. Consists of a catalytic RNA component (M1 or rnpB) and a protein subunit.

It catalyses the reaction Endonucleolytic cleavage of RNA, removing 5'-extranucleotides from tRNA precursor.. Functionally, RNaseP catalyzes the removal of the 5'-leader sequence from pre-tRNA to produce the mature 5'-terminus. It can also cleave other RNA substrates such as 4.5S RNA. The protein component plays an auxiliary but essential role in vivo by binding to the 5'-leader sequence and broadening the substrate specificity of the ribozyme. The chain is Ribonuclease P protein component from Borrelia hermsii (strain HS1 / DAH).